Reading from the N-terminus, the 247-residue chain is Small ribosomal subunit protein uS2 (247 aa).

The protein belongs to the universal ribosomal protein uS2 family.

This is Small ribosomal subunit protein uS2 from Pseudomonas savastanoi pv. phaseolicola (strain 1448A / Race 6) (Pseudomonas syringae pv. phaseolicola (strain 1448A / Race 6)).